The primary structure comprises 282 residues: ATP synthase gamma chain (282 aa).

This sequence belongs to the ATPase gamma chain family. In terms of assembly, F-type ATPases have 2 components, CF(1) - the catalytic core - and CF(0) - the membrane proton channel. CF(1) has five subunits: alpha(3), beta(3), gamma(1), delta(1), epsilon(1). CF(0) has three main subunits: a, b and c.

The protein localises to the cell membrane. Produces ATP from ADP in the presence of a proton gradient across the membrane. The gamma chain is believed to be important in regulating ATPase activity and the flow of protons through the CF(0) complex. The chain is ATP synthase gamma chain from Clostridium botulinum (strain Langeland / NCTC 10281 / Type F).